A 462-amino-acid polypeptide reads, in one-letter code: Sodium-coupled neutral amino acid transporter 7 (462 aa).

S28 bears the Phosphoserine mark. 11 helical membrane passes run 56-76 (AIFI…PAAF), 82-102 (VAAG…GLVI), 130-150 (LCEV…LIII), 178-198 (FTIS…REIG), 205-225 (FLSV…YIWP), 239-259 (ASWM…QCHV), 282-302 (AAMV…FLTF), 319-339 (MAVA…YPIL), 371-391 (VLQT…IPDI), 395-415 (ISVI…LCLI), and 428-448 (ASWW…AFIF).

Belongs to the amino acid/polyamine transporter 2 family. Interacts with the mTORC1 complex; this interaction mediates the recruitment of mTORC1 to the lysosome and its subsequent activation.

The protein resides in the lysosome membrane. The protein localises to the cell projection. It is found in the axon. The enzyme catalyses L-asparagine(in) + Na(+)(in) = L-asparagine(out) + Na(+)(out). It carries out the reaction L-glutamine(in) + Na(+)(in) = L-glutamine(out) + Na(+)(out). In terms of biological role, symporter that selectively cotransports sodium ions and amino acids, such as L-glutamine and L-asparagine from the lysosome into the cytoplasm and may participates in mTORC1 activation. The transport activity requires an acidic lysosomal lumen. This chain is Sodium-coupled neutral amino acid transporter 7, found in Homo sapiens (Human).